A 124-amino-acid polypeptide reads, in one-letter code: Small ribosomal subunit protein uS12 (124 aa).

Asp89 is modified (3-methylthioaspartic acid).

It belongs to the universal ribosomal protein uS12 family. As to quaternary structure, part of the 30S ribosomal subunit. Contacts proteins S8 and S17. May interact with IF1 in the 30S initiation complex.

Functionally, with S4 and S5 plays an important role in translational accuracy. Its function is as follows. Interacts with and stabilizes bases of the 16S rRNA that are involved in tRNA selection in the A site and with the mRNA backbone. Located at the interface of the 30S and 50S subunits, it traverses the body of the 30S subunit contacting proteins on the other side and probably holding the rRNA structure together. The combined cluster of proteins S8, S12 and S17 appears to hold together the shoulder and platform of the 30S subunit. This is Small ribosomal subunit protein uS12 from Serratia proteamaculans (strain 568).